Here is a 202-residue protein sequence, read N- to C-terminus: MYEGPVQDLIDELGKLPGVGPKSAQRIAFHLLSVEPPEIDRLKNALQRVRDGVQFCVVCGTVSDKEHCRICADPRRDRTVICVVEEPKDVQAVERTREFKGRYHVLGGALDPLSGVGPDQLRIRELLARIGNQEDGVDVSEVIIATDPNTEGEATATYLVRMLRDFPGLTVSRLASGLPMGGDLEFADELTLGRALSGRRTL.

The C4-type zinc finger occupies 56 to 71; the sequence is CVVCGTVSDKEHCRIC. The region spanning 79–179 is the Toprim domain; sequence TVICVVEEPK…TVSRLASGLP (101 aa).

It belongs to the RecR family.

Its function is as follows. May play a role in DNA repair. It seems to be involved in an RecBC-independent recombinational process of DNA repair. It may act with RecF and RecO. This is Recombination protein RecR from Rhodococcus jostii (strain RHA1).